The chain runs to 172 residues: Small ribosomal subunit protein uS5 (172 aa).

The S5 DRBM domain occupies 17–80 (LREKMISVNR…EQARRNMFKV (64 aa)).

The protein belongs to the universal ribosomal protein uS5 family. As to quaternary structure, part of the 30S ribosomal subunit. Contacts proteins S4 and S8.

Functionally, with S4 and S12 plays an important role in translational accuracy. In terms of biological role, located at the back of the 30S subunit body where it stabilizes the conformation of the head with respect to the body. The polypeptide is Small ribosomal subunit protein uS5 (Burkholderia pseudomallei (strain 1106a)).